A 549-amino-acid polypeptide reads, in one-letter code: MKNINFNNTQSYQDLKNHFRKIKNIHLRDLFASDLNRFKKFSIIFENEMLIDFSKNRITDETLIYLLNLAKETDVKSGIKLMFSGAKINKTENRSVLHIALRNRTNRPIILNNCNIMLEVNALLEKMKNFSKMVIHGEWKGYTGKSISNVVNIGIGGSDLGPYMVTEALRPYKNHLNMYYVSNIDGTHLTEVLKKINPENTIFLIASKTFTTDETITNAHSAKKWFLHYSQDQSALDKHFFALSANIKNALNFGININNIFKFWDWVGGRFSLWSSAGLSIMLSIGFDNFEKFLDGAHAMDNHFYHTNYKENIPILLALISIWYTNFFGSETEAIFPYDQYMHRFSAYFQQSNMESNGKSINRNGQRINYQTGPIIWGEPGTNGQHAFYQLIHQGTRLIPCDFIAPVFSHNDLNNHHMKLISNFFAQTQALAFGQSRDSILHRLILSKKNQDDIKRILPFKICKGNQPTNSILIRKITPYNLGALIALYEHKIFVQGYILNIFSFDQWGVELGKELSQNIYNYLNINVKNKSYDASTEGLINFYKSFMI.

The active-site Proton donor is the Glu355. Active-site residues include His386 and Lys514.

The protein belongs to the GPI family.

The protein resides in the cytoplasm. The catalysed reaction is alpha-D-glucose 6-phosphate = beta-D-fructose 6-phosphate. Its pathway is carbohydrate biosynthesis; gluconeogenesis. It functions in the pathway carbohydrate degradation; glycolysis; D-glyceraldehyde 3-phosphate and glycerone phosphate from D-glucose: step 2/4. In terms of biological role, catalyzes the reversible isomerization of glucose-6-phosphate to fructose-6-phosphate. This is Glucose-6-phosphate isomerase from Buchnera aphidicola subsp. Acyrthosiphon pisum (strain APS) (Acyrthosiphon pisum symbiotic bacterium).